Here is a 314-residue protein sequence, read N- to C-terminus: F-box protein AUF2 (314 aa).

In terms of domain architecture, F-box spans 1–49; the sequence is MDVFDGLPDPIIVDILNKVGDVKTLLRCSSLSKRFNSLVPQSESLTLRL.

As to quaternary structure, part of a SCF (ASK-cullin-F-box) protein ligase complex.

The protein localises to the nucleus. It functions in the pathway protein modification; protein ubiquitination. Functionally, component of SCF(ASK-cullin-F-box) E3 ubiquitin ligase complexes, which may mediate the ubiquitination and subsequent proteasomal degradation of target proteins. The protein is F-box protein AUF2 of Arabidopsis thaliana (Mouse-ear cress).